The primary structure comprises 577 residues: MDRAVSQVALENDEREAKNTWRLIFRIAILFLTVVTLAISVASLLYSMGASTPSDLVGIPTRISRAEEKITSTLGSNQDVVDRIYKQVALESPLALLKTETTIMNAITSLSYQINGAANNSGWGAPIHDPDYIGGIGKELIVDDASDVTSFYPSAFQEHLNFIPAPTTGSGCTRIPSFDMSATHYCYTHNVILSGCRDHSHSYQYLALGVLRTSATGRVFFSTLRSINLDDTQNRKSCSVSATPLGCDMLCSKVTETEEEDYNSAVPTRMAHGRLGFDGQYHEKDLDVTTLFGDWVANYPGVGGGSFIDSRVWFSVYGGLKPNSPSDTVQEGKYVIYKRYNDTCPDEQDYQIRMAKSSYKPGRFGGKRIQQAILSIKVSTSLGEDPVLTVPPNTVTLMGAEGRILTVGTSHFLYQRGSSYFSPALLYPMTVSNKTATLHSPYTFNAFTRPGSIPCQASARCPNPCVTGVYTDPYPLIFYRNHTLRGVFGTMLDGVQARLNPASAVFDSTSRSRITRVSSSSTKAAYTTSTCFKVVKTNKTYCLSIAEISNTLFGEFRIVPLLVEILKDDGVREARSG.

Topologically, residues 1–26 (MDRAVSQVALENDEREAKNTWRLIFR) are intravirion. Residues 27–47 (IAILFLTVVTLAISVASLLYS) form a helical membrane-spanning segment. Over 48 to 577 (MGASTPSDLV…DDGVREARSG (530 aa)) the chain is Virion surface. Residue asparagine 119 is glycosylated (N-linked (GlcNAc...) asparagine; by host). The segment at 124–152 (GAPIHDPDYIGGIGKELIVDDASDVTSFY) is important for interaction with fusion/F protein. 3 disulfides stabilise this stretch: cysteine 172–cysteine 196, cysteine 186–cysteine 247, and cysteine 238–cysteine 251. Residues 234 to 239 (NRKSCS) form an involved in neuraminidase activity region. Residues asparagine 341 and asparagine 433 are each glycosylated (N-linked (GlcNAc...) asparagine; by host). 2 disulfide bridges follow: cysteine 344-cysteine 461 and cysteine 455-cysteine 465. N-linked (GlcNAc...) asparagine; by host glycosylation is found at asparagine 481 and asparagine 538. A disulfide bridge links cysteine 531 with cysteine 542.

The protein belongs to the paramyxoviruses hemagglutinin-neuraminidase family. In terms of assembly, homotetramer; composed of disulfide-linked homodimers. Interacts with F protein trimer. Interacts with host CG-1B; this interaction inhibits viral adsorption and replication rather than internalization.

The protein resides in the virion membrane. The protein localises to the host cell membrane. It catalyses the reaction Hydrolysis of alpha-(2-&gt;3)-, alpha-(2-&gt;6)-, alpha-(2-&gt;8)- glycosidic linkages of terminal sialic acid residues in oligosaccharides, glycoproteins, glycolipids, colominic acid and synthetic substrates.. In terms of biological role, mediates the viral entry into the host cell together with fusion/F protein. Attaches the virus to sialic acid-containing cell receptors and thereby initiates infection. Binding of HN protein to the receptor induces a conformational change that allows the F protein to trigger virion/cell membranes fusion. Neuraminidase activity ensures the efficient spread of the virus by dissociating the mature virions from the neuraminic acid containing glycoproteins. The polypeptide is Hemagglutinin-neuraminidase (HN) (Newcastle disease virus (strain Chicken/United States/LaSota/46) (NDV)).